The following is an 846-amino-acid chain: uncharacterized protein (846 aa).

Disordered regions lie at residues 159 to 217, 254 to 276, 332 to 414, 459 to 501, 556 to 651, and 803 to 846; these read VPTF…INHI, CNLN…SNSN, NKLN…PLSI, GSSI…SNSL, QQQQ…NFND, and TTTT…NKNK. Low complexity predominate over residues 163-217; it reads HNQNQNNNNQNNNQNNNNNNNNNNNNNNNNNNNNNNNSQNNNNNQNNNNNHINHI. Over residues 355 to 414 the composition is skewed to low complexity; that stretch reads LQSPNSQSLANSSANISSNALNQSSSSQQQQPQSTSQQQQQQHKMNSSSGNISPPLPLSI. Residues 459 to 482 show a composition bias toward polar residues; sequence GSSITPKNLSPLSSSAPNTPKQFA. Low complexity-rich tracts occupy residues 483 to 501, 568 to 642, and 811 to 846; these read SLSS…SNSL, QQQQ…QPNN, and NNNN…NKNK.

This is an uncharacterized protein from Dictyostelium discoideum (Social amoeba).